A 253-amino-acid polypeptide reads, in one-letter code: RNA polymerase sigma factor SigI6 (253 aa).

The Polymerase core binding signature appears at 63-76; sequence EEYSVALLAFNEAI. The segment at residues 203–222 is a DNA-binding region (H-T-H motif); that stretch reads TLELLKLAKVSRRTIERNKK.

It belongs to the sigma-70 factor family. SigI subfamily. As to quaternary structure, interacts with RsgI6.

It localises to the cytoplasm. Its activity is regulated as follows. Negatively regulated by the anti-sigma-I factor RsgI6. Binding of the polysaccharide substrate to RsgI6 may lead to the release and activation of SigI6. In terms of biological role, sigma factors are initiation factors that promote the attachment of RNA polymerase to specific initiation sites and are then released. This sigma factor is involved in regulation of cellulosomal genes via an external polysaccharide-sensing mechanism. Recognizes the predicted promoters associated with sigI6 itself, xyn11B, xyn10D, xyn10Z, xyn10Y, cel9V, cseP, sigI1, cipA, and rsgI5. The protein is RNA polymerase sigma factor SigI6 of Acetivibrio thermocellus (strain ATCC 27405 / DSM 1237 / JCM 9322 / NBRC 103400 / NCIMB 10682 / NRRL B-4536 / VPI 7372) (Clostridium thermocellum).